Reading from the N-terminus, the 709-residue chain is DNA ligase (709 aa).

NAD(+) contacts are provided by residues 34 to 38, 83 to 84, and Glu-115; these read DAEYD and SL. Lys-117 serves as the catalytic N6-AMP-lysine intermediate. NAD(+)-binding residues include Arg-138, Glu-185, Lys-301, and Lys-325. 4 residues coordinate Zn(2+): Cys-419, Cys-422, Cys-437, and Cys-443. In terms of domain architecture, BRCT spans 602–691; that stretch reads RQSDTLAGKT…AEPPPSPPPP (90 aa). The segment at 679–709 is disordered; the sequence is GTTAEPPPSPPPPPPETNTDGNQLLLPLDGE. The segment covering 683–694 has biased composition (pro residues); sequence EPPPSPPPPPPE.

Belongs to the NAD-dependent DNA ligase family. LigA subfamily. Mg(2+) serves as cofactor. Mn(2+) is required as a cofactor.

It catalyses the reaction NAD(+) + (deoxyribonucleotide)n-3'-hydroxyl + 5'-phospho-(deoxyribonucleotide)m = (deoxyribonucleotide)n+m + AMP + beta-nicotinamide D-nucleotide.. Its function is as follows. DNA ligase that catalyzes the formation of phosphodiester linkages between 5'-phosphoryl and 3'-hydroxyl groups in double-stranded DNA using NAD as a coenzyme and as the energy source for the reaction. It is essential for DNA replication and repair of damaged DNA. The sequence is that of DNA ligase from Chloroflexus aurantiacus (strain ATCC 29364 / DSM 637 / Y-400-fl).